A 330-amino-acid polypeptide reads, in one-letter code: METVTSSDSSSAVENEHPQDTPESNNSVYTSFMKSHRCYDLIPTSSKLVVFDTSLQVKKAFFALVTNGVRAAPLWDSKKQSFVGMLTITDFINILHRYYKSALVQIYELEEHKIETWREVYLQDSFKPLVCISPNASLFDAVSSLIRNKIHRLPVIDPESGNTLYILTHKRILKFLKLFITEFPKPEFMSKSLEELQIGTYANIAMVRTTTPVYVALGIFVQHRVSALPVVDEKGRVVDIYSKFDVINLAAEKTYNNLDVSVTKALQHRSHYFEGVLKCYLHETLETIINRLVEAEVHRLVVVDENDVVKGIVSLSDILQALVLTGGEKP.

The span at 1 to 13 shows a compositional bias: polar residues; that stretch reads METVTSSDSSSAV. Positions 1 to 26 are disordered; sequence METVTSSDSSSAVENEHPQDTPESNN. CBS domains lie at 43-103, 125-187, and 198-260; these read PTSS…KSAL, SFKP…PKPE, and IGTY…NLDV. Residues Arg-70, 85–90, Val-130, 151–152, and Lys-170 each bind ADP; these read MLTITD and HR. AMP is bound by residues Arg-70, 85 to 90, Val-130, His-151, 151 to 152, Lys-170, Thr-200, Ala-205, 226 to 227, and 242 to 245; these read MLTITD, HR, SA, and SKFD. ATP contacts are provided by residues Arg-70, 85–90, Val-130, 151–152, Arg-152, and Lys-170; these read MLTITD and HR. The short motif at 138-159 is the AMPK pseudosubstrate element; that stretch reads LFDAVSSLIRNKIHRLPVIDPE. 242–245 is a binding site for ADP; it reads SKFD. 242 to 245 serves as a coordination point for ATP; that stretch reads SKFD. Ser-261 is subject to Phosphoserine; by ULK1. Thr-263 is modified (phosphothreonine; by ULK1). ADP is bound at residue Arg-269. Arg-269 contributes to the AMP binding site. Arg-269 contacts ATP. A Phosphoserine; by ULK1 modification is found at Ser-270. A CBS 4 domain is found at 272–329; it reads YFEGVLKCYLHETLETIINRLVEAEVHRLVVVDENDVVKGIVSLSDILQALVLTGGEK. ADP contacts are provided by residues Leu-277 and 298-299; that span reads HR. Residues Leu-277, His-298, 298–299, and 314–317 contribute to the AMP site; these read HR and SLSD. Residues Leu-277 and 298 to 299 each bind ATP; that span reads HR.

The protein belongs to the 5'-AMP-activated protein kinase gamma subunit family. In terms of assembly, AMPK is a heterotrimer of an alpha catalytic subunit (PRKAA1 or PRKAA2), a beta (PRKAB1 or PRKAB2) and a gamma non-catalytic subunits (PRKAG1, PRKAG2 or PRKAG3). Interacts with FNIP1 and FNIP2. Phosphorylated by ULK1 and ULK2; leading to negatively regulate AMPK activity and suggesting the existence of a regulatory feedback loop between ULK1, ULK2 and AMPK. Post-translationally, glycosylated; O-GlcNAcylated by OGT, promoting the AMP-activated protein kinase (AMPK) activity.

In terms of biological role, AMP/ATP-binding subunit of AMP-activated protein kinase (AMPK), an energy sensor protein kinase that plays a key role in regulating cellular energy metabolism. In response to reduction of intracellular ATP levels, AMPK activates energy-producing pathways and inhibits energy-consuming processes: inhibits protein, carbohydrate and lipid biosynthesis, as well as cell growth and proliferation. AMPK acts via direct phosphorylation of metabolic enzymes, and by longer-term effects via phosphorylation of transcription regulators. Also acts as a regulator of cellular polarity by remodeling the actin cytoskeleton; probably by indirectly activating myosin. Gamma non-catalytic subunit mediates binding to AMP, ADP and ATP, leading to activate or inhibit AMPK: AMP-binding results in allosteric activation of alpha catalytic subunit (PRKAA1 or PRKAA2) both by inducing phosphorylation and preventing dephosphorylation of catalytic subunits. ADP also stimulates phosphorylation, without stimulating already phosphorylated catalytic subunit. ATP promotes dephosphorylation of catalytic subunit, rendering the AMPK enzyme inactive. This is 5'-AMP-activated protein kinase subunit gamma-1 (PRKAG1) from Sus scrofa (Pig).